Here is a 740-residue protein sequence, read N- to C-terminus: ATP-dependent zinc metalloprotease YME1L (740 aa).

Residues 1–256 lie on the Mitochondrial matrix side of the membrane; the sequence is MFSTTTHSVP…KSGKTMKYLK (256 aa). The helical transmembrane segment at 257 to 277 threads the bilayer; it reads TLQTIVVIVVFLGIFLSFFTT. The Mitochondrial intermembrane portion of the chain corresponds to 278 to 740; it reads SNGSVFRSIQ…IKAILNESQT (463 aa). Residue 347–351 participates in ATP binding; that stretch reads GTGKT. His563 contributes to the Zn(2+) binding site. Residue Glu564 is part of the active site. Zn(2+) contacts are provided by His567 and Asp641.

It in the N-terminal section; belongs to the AAA ATPase family. This sequence in the C-terminal section; belongs to the peptidase M41 family. Zn(2+) serves as cofactor.

The protein localises to the mitochondrion inner membrane. Its function is as follows. ATP-dependent metalloprotease that catalyzes the degradation of folded and unfolded proteins with a suitable degron sequence in the mitochondrial intermembrane region. Plays an important role in regulating mitochondrial morphology and function by cleaving Opa1, giving rise to a form of Opa1 that promotes maintenance of normal mitochondrial structure and mitochondrial protein metabolism. Ensures cell proliferation, maintains normal cristae morphology and complex I respiration activity, promotes antiapoptotic activity and protects mitochondria from the accumulation of oxidatively damaged membrane proteins. Required to control the accumulation of nonassembled respiratory chain subunits such as ND-30. The chain is ATP-dependent zinc metalloprotease YME1L from Drosophila melanogaster (Fruit fly).